A 296-amino-acid polypeptide reads, in one-letter code: Elongation factor Ts (296 aa).

The interval 79–82 (TDFV) is involved in Mg(2+) ion dislocation from EF-Tu.

The protein belongs to the EF-Ts family.

It localises to the cytoplasm. Associates with the EF-Tu.GDP complex and induces the exchange of GDP to GTP. It remains bound to the aminoacyl-tRNA.EF-Tu.GTP complex up to the GTP hydrolysis stage on the ribosome. This is Elongation factor Ts (tsf) from Spiroplasma citri.